Reading from the N-terminus, the 217-residue chain is Adenylate kinase (217 aa).

10–15 contacts ATP; that stretch reads GAGKGT. The interval 30–59 is NMP; it reads STGDMLRAQVKAGTALGLEAKKHMDAGGLV. Residues Thr-31, Arg-36, 57–59, 85–88, and Gln-92 each bind AMP; these read GLV and GFPR. Positions 122 to 159 are LID; that stretch reads GRRAHLASGRTYHVKFNPPKVEGIDDVTGEPLVQRDDD. Residues Arg-123 and 132 to 133 each bind ATP; that span reads TY. Positions 156 and 167 each coordinate AMP. Residue Gly-203 participates in ATP binding.

The protein belongs to the adenylate kinase family. Monomer.

The protein resides in the cytoplasm. The catalysed reaction is AMP + ATP = 2 ADP. It functions in the pathway purine metabolism; AMP biosynthesis via salvage pathway; AMP from ADP: step 1/1. Catalyzes the reversible transfer of the terminal phosphate group between ATP and AMP. Plays an important role in cellular energy homeostasis and in adenine nucleotide metabolism. This chain is Adenylate kinase, found in Dechloromonas aromatica (strain RCB).